The sequence spans 392 residues: Phosphoglycerate kinase (392 aa).

Residues 21–23, R36, 59–62, R118, and R151 each bind substrate; these read DFN and HLGR. Residues K201, G292, E323, and 349-352 each bind ATP; that span reads GGDS.

The protein belongs to the phosphoglycerate kinase family. As to quaternary structure, monomer.

Its subcellular location is the cytoplasm. It catalyses the reaction (2R)-3-phosphoglycerate + ATP = (2R)-3-phospho-glyceroyl phosphate + ADP. It functions in the pathway carbohydrate degradation; glycolysis; pyruvate from D-glyceraldehyde 3-phosphate: step 2/5. The polypeptide is Phosphoglycerate kinase (Borrelia hermsii (strain HS1 / DAH)).